We begin with the raw amino-acid sequence, 40 residues long: Natriuretic peptide TNPd (40 aa).

An intrachain disulfide couples cysteine 9 to cysteine 25.

This sequence belongs to the natriuretic peptide family. Expressed by the venom gland.

It localises to the secreted. In terms of biological role, snake venom natriuretic peptide that exhibits vasoactive and hypotensive activity. Stimulates cGMP production through the natriuretic peptide receptor 1 (NPR1) with very high potencies for the rat NPR1 (EC(50)=18 nM), and very weak potencies over human NPR1 (30% activation at 10 uM). This is Natriuretic peptide TNPd from Oxyuranus microlepidotus (Inland taipan).